The following is a 446-amino-acid chain: MGREIITLQAGQCGNQVGSQFWQQLCLEHGICPDGTLEDFATEGLDRKDVFFYQSDDTRYIPRAILLDLEPRVVNNILSDTYGSLYNPENIFVATDGGGAGNNWAHGYAHAEKIFEDIVDMIDREAEGSDSLEGFSLLHSIAGGTGSGLGSYLLERLNDRFPKKIVQTYSVFPNNRSVSDVVVQPYNSLLTLKRLTLNADAVVVLDNAALAHIAADRLHIQNPTFHQQNQLVSTVMSASTTTLRYPGYMNNDLVSIIASLIPTPRCHFLSTSYTPFTSQQVEDARTIRKTTVLDVMRRLLQPKNRMVSVNPGKQSCFISILNIIQGEADPNDVHKSLLRIRERKLATFIPWGPASIQVALSKKSPYIKTNHRVSGLMLANHTSIASLFKRTLDQYDRLRKRNAFLDQYRKESIFENSLDEFDNSREVVADLIREYEACEQPEYLSM.

142–148 (AGGTGSG) contacts GTP.

It belongs to the tubulin family.

The protein localises to the cytoplasm. The protein resides in the cytoskeleton. It is found in the microtubule organizing center. Its subcellular location is the spindle pole body. Functionally, tubulin is the major constituent of microtubules. The gamma chain is found at microtubule organizing centers (MTOC) such as the spindle poles or the centrosome, suggesting that it is involved in the minus-end nucleation of microtubule assembly. The polypeptide is Tubulin gamma chain (tug1) (Schizosaccharomyces japonicus (Fission yeast)).